Reading from the N-terminus, the 368-residue chain is 2-aminoethylphosphonate--pyruvate transaminase (368 aa).

N6-(pyridoxal phosphate)lysine is present on Lys192.

The protein belongs to the class-V pyridoxal-phosphate-dependent aminotransferase family. PhnW subfamily. As to quaternary structure, homodimer. Pyridoxal 5'-phosphate serves as cofactor.

It carries out the reaction (2-aminoethyl)phosphonate + pyruvate = phosphonoacetaldehyde + L-alanine. Involved in phosphonate degradation. The sequence is that of 2-aminoethylphosphonate--pyruvate transaminase from Pseudomonas entomophila (strain L48).